The chain runs to 747 residues: Homeobox-leucine zipper protein GLABRA 2 (747 aa).

The disordered stretch occupies residues 31-112; the sequence is RNASSGSTNP…KKYHRHTTDQ (82 aa). Polar residues predominate over residues 58–68; that stretch reads EMSSENSGPTR. Positions 73-90 are enriched in acidic residues; it reads EDLEGEDHDDEEEEEEDG. Residues 97-107 show a composition bias toward basic residues; the sequence is TNKRKRKKYHR. Positions 101 to 160 form a DNA-binding region, homeobox; the sequence is KRKKYHRHTTDQIRHMEALFKETPHPDEKQRQQLSKQLGLAPRQVKFWFQNRRTQIKAIQ. A coiled-coil region spans residues 155 to 223; the sequence is QIKAIQERHE…LDKLRAALGR (69 aa). In terms of domain architecture, START spans 250–489; sequence FALEKSRIAE…LQLHCERLVF (240 aa).

This sequence belongs to the HD-ZIP homeobox family. Class IV subfamily. In terms of assembly, interacts with GIR1 and GIR2. In terms of tissue distribution, expressed in individual developing trichome cells of the emerging leaf primordia. Expressed in differentiating hairless cells of root epidermis.

It is found in the nucleus. Transcription factor involved in the determination of epidermal cell identity. Required for correct morphological development and maturation of trichomes. Regulates the frequency of trichome initiation and determines trichome spacing. Acts as a negative factor for root hair development. Required for ectopic repression of root hair development in a subset of epidermal cells. May suppress hair formation in root epidermis by promoting differentiation into hairless epidermal cells. Directly suppresses the bHLH transcription factor genes, RHD6, RSL1, RSL2, LRL1, and LRL2, which have diverse functions in root hair development. Required for normal development of seed coat mucilage. Involved in the control of seed oil accumulation. Acts as a negative regulator of anthocyanin biosynthesis. May directly repress the expression of some component genes from the MYB-bHLH-WD40 (MBW) transcriptional activator complex. The MBW complex activates the transcription of late biosynthesis genes in the flavonoid pathway, leading to the production of anthocyanins. The protein is Homeobox-leucine zipper protein GLABRA 2 of Arabidopsis thaliana (Mouse-ear cress).